Consider the following 201-residue polypeptide: Lipopolysaccharide core heptose(II)-phosphate phosphatase (201 aa).

An N-terminal signal peptide occupies residues 1 to 35; that stretch reads MLAFTLRFIKNKRYLATLAGALVIIAGLTSQHAWS.

The protein belongs to the phosphoglycerate mutase family. Ais subfamily.

It localises to the periplasm. It participates in bacterial outer membrane biogenesis; lipopolysaccharide metabolism. Functionally, catalyzes the dephosphorylation of heptose(II) of the outer membrane lipopolysaccharide core. This chain is Lipopolysaccharide core heptose(II)-phosphate phosphatase, found in Salmonella choleraesuis (strain SC-B67).